The chain runs to 487 residues: Phosphoglucosamine mutase (487 aa).

Serine 134 (phosphoserine intermediate) is an active-site residue. Mg(2+) is bound by residues serine 134, aspartate 277, aspartate 279, and aspartate 281. Serine 134 is subject to Phosphoserine.

It belongs to the phosphohexose mutase family. It depends on Mg(2+) as a cofactor. Post-translationally, activated by phosphorylation.

It catalyses the reaction alpha-D-glucosamine 1-phosphate = D-glucosamine 6-phosphate. Functionally, catalyzes the conversion of glucosamine-6-phosphate to glucosamine-1-phosphate. In Gloeothece citriformis (strain PCC 7424) (Cyanothece sp. (strain PCC 7424)), this protein is Phosphoglucosamine mutase.